The following is a 586-amino-acid chain: Dual specificity tyrosine-phosphorylation-regulated kinase 3 (586 aa).

Basic and acidic residues predominate over residues 1-13 (MGGAARERGRKDA). A disordered region spans residues 1–187 (MGGAARERGR…QGVIGGPNNG (187 aa)). One can recognise a Protein kinase domain in the interval 208–521 (YEVLKIIGKG…PAQALRHPWI (314 aa)). Residues 214-222 (IGKGSFGQV), K237, and 287-290 (FELL) contribute to the ATP site. Catalysis depends on D334, which acts as the Proton acceptor. A Phosphotyrosine modification is found at Y368. Residues 467 to 480 (RSRRGKKRGPPGSK) carry the Nuclear localization signal motif.

It belongs to the protein kinase superfamily. CMGC Ser/Thr protein kinase family. MNB/DYRK subfamily. In terms of assembly, interacts with SIRT1. Mg(2+) is required as a cofactor. Post-translationally, protein kinase activity is activated following autophosphorylation at Tyr-368. In terms of processing, ubiquitinated at anaphase by the anaphase-promoting complex (APC/C), leading to its degradation by the proteasome. Expressed predominantly in testis. Expressed in late pachytene spermatocytes.

The protein resides in the nucleus. The protein localises to the cytoplasm. It localises to the nucleus speckle. Its subcellular location is the cytoplasmic granule. It is found in the cytoskeleton. The protein resides in the microtubule organizing center. The protein localises to the centrosome. The catalysed reaction is L-seryl-[protein] + ATP = O-phospho-L-seryl-[protein] + ADP + H(+). The enzyme catalyses L-threonyl-[protein] + ATP = O-phospho-L-threonyl-[protein] + ADP + H(+). It carries out the reaction L-tyrosyl-[protein] + ATP = O-phospho-L-tyrosyl-[protein] + ADP + H(+). Protein kinase activity is activated following autophosphorylation at Tyr-368. Its function is as follows. Dual-specificity protein kinase that promotes disassembly of several types of membraneless organelles during mitosis, such as stress granules, nuclear speckles and pericentriolar material. Dual-specificity tyrosine-regulated kinases (DYRKs) autophosphorylate a critical tyrosine residue in their activation loop and phosphorylate their substrate on serine and threonine residues. Acts as a central dissolvase of membraneless organelles during the G2-to-M transition, after the nuclear-envelope breakdown: acts by mediating phosphorylation of multiple serine and threonine residues in unstructured domains of proteins, such as SRRM1 and PCM1. Does not mediate disassembly of all membraneless organelles: disassembly of P-body and nucleolus is not regulated by DYRK3. Dissolution of membraneless organelles at the onset of mitosis is also required to release mitotic regulators, such as ZNF207, from liquid-unmixed organelles where they are sequestered and keep them dissolved during mitosis. Regulates mTORC1 by mediating the dissolution of stress granules: during stressful conditions, DYRK3 partitions from the cytosol to the stress granule, together with mTORC1 components, which prevents mTORC1 signaling. When stress signals are gone, the kinase activity of DYRK3 is required for the dissolution of stress granule and mTORC1 relocation to the cytosol: acts by mediating the phosphorylation of the mTORC1 inhibitor AKT1S1, allowing full reactivation of mTORC1 signaling. Also acts as a negative regulator of EPO-dependent erythropoiesis: may place an upper limit on red cell production during stress erythropoiesis. Inhibits cell death due to cytokine withdrawal in hematopoietic progenitor cells. Promotes cell survival upon genotoxic stress through phosphorylation of SIRT1: this in turn inhibits p53/TP53 activity and apoptosis. In Rattus norvegicus (Rat), this protein is Dual specificity tyrosine-phosphorylation-regulated kinase 3.